The primary structure comprises 730 residues: Rap1 GTPase-activating protein 2 (730 aa).

Residue serine 7 is modified to Phosphoserine; by PKG/PRKG1; in vitro. The tract at residues 32-53 is disordered; that stretch reads ANSSDATLPDRPLSPPLTAPPT. Serine 45 carries the post-translational modification Phosphoserine. Threonine 49 bears the Phosphothreonine mark. In terms of domain architecture, Rap-GAP spans 248-464; sequence IVSYDEHEVN…RTRAALLDNL (217 aa). Serine 507 is modified (phosphoserine). The tract at residues 509–533 is disordered; sequence ETMVGGQKKSHSGGIPGSLSGGISH. Phosphoserine is present on residues serine 544, serine 558, serine 564, serine 612, and serine 613. The disordered stretch occupies residues 552-730; that stretch reads VKNQSRSPIK…LSHASSGAGH (179 aa). The span at 585 to 613 shows a compositional bias: polar residues; the sequence is DSTSSTPKTPDGGHSSQEIKSETSSNPSS. Over residues 618-631 the composition is skewed to basic and acidic residues; the sequence is PNKEKPFMKLKENG. Residues 635 to 647 are compositionally biased toward low complexity; that stretch reads SRSSSSTSSVSST. The span at 661 to 670 shows a compositional bias: polar residues; sequence GSQPSTTSPF. Residues 678–687 show a composition bias toward low complexity; sequence SPSPSSESPS. The segment covering 699 to 712 has biased composition (polar residues); that stretch reads RSPTDAKSRNSPRS.

In vitro phosphorylated by cGMP-dependent protein kinase 1 (cGKI) at Ser-7; the phosphorylation probably does not regulate GAP activity. As to expression, isoform 1 and isoform 2 are expressed in platelets with isoform 2 being the predominant form. Expressed in lymphocytes, heart, testis and pancreas.

It localises to the cytoplasm. Its subcellular location is the perinuclear region. Its function is as follows. GTPase activator for the nuclear Ras-related regulatory protein RAP-1A (KREV-1), converting it to the putatively inactive GDP-bound state. In Homo sapiens (Human), this protein is Rap1 GTPase-activating protein 2 (RAP1GAP2).